Here is a 222-residue protein sequence, read N- to C-terminus: Small ribosomal subunit protein uS3 (222 aa).

The 69-residue stretch at 38–106 (IRKFISEKLA…NVHINIVEIK (69 aa)) folds into the KH type-2 domain.

Belongs to the universal ribosomal protein uS3 family. As to quaternary structure, part of the 30S ribosomal subunit. Forms a tight complex with proteins S10 and S14.

In terms of biological role, binds the lower part of the 30S subunit head. Binds mRNA in the 70S ribosome, positioning it for translation. The protein is Small ribosomal subunit protein uS3 of Lactobacillus gasseri (strain ATCC 33323 / DSM 20243 / BCRC 14619 / CIP 102991 / JCM 1131 / KCTC 3163 / NCIMB 11718 / NCTC 13722 / AM63).